The primary structure comprises 467 residues: Chromosomal replication initiator protein DnaA (467 aa).

The domain I, interacts with DnaA modulators stretch occupies residues 1–80 (MTSELWHQCL…APRISLKIGS (80 aa)). The interval 80-130 (SITGNSKGQQASKDSAVGATRTTAPSRPVIADVAPSGERNVTVEGAIKHES) is domain II. A domain III, AAA+ region region spans residues 131–347 (YLNPTFTFET…GALKLVIANA (217 aa)). ATP is bound by residues G175, G177, K178, and T179. A domain IV, binds dsDNA region spans residues 348–467 (HFTGQEITPA…YQNFMRMLTS (120 aa)).

The protein belongs to the DnaA family. As to quaternary structure, oligomerizes as a right-handed, spiral filament on DNA at oriC.

It localises to the cytoplasm. In terms of biological role, plays an essential role in the initiation and regulation of chromosomal replication. ATP-DnaA binds to the origin of replication (oriC) to initiate formation of the DNA replication initiation complex once per cell cycle. Binds the DnaA box (a 9 base pair repeat at the origin) and separates the double-stranded (ds)DNA. Forms a right-handed helical filament on oriC DNA; dsDNA binds to the exterior of the filament while single-stranded (ss)DNA is stabiized in the filament's interior. The ATP-DnaA-oriC complex binds and stabilizes one strand of the AT-rich DNA unwinding element (DUE), permitting loading of DNA polymerase. After initiation quickly degrades to an ADP-DnaA complex that is not apt for DNA replication. Binds acidic phospholipids. The sequence is that of Chromosomal replication initiator protein DnaA from Hahella chejuensis (strain KCTC 2396).